The sequence spans 776 residues: Venom dipeptidyl peptidase 4 (776 aa).

An N-terminal signal peptide occupies residues 1-19 (MVPLRSFVLLNGLFFVLLA). Asparagine 44, asparagine 66, and asparagine 329 each carry an N-linked (GlcNAc...) asparagine glycan. 2 disulfides stabilise this stretch: cysteine 449/cysteine 452 and cysteine 462/cysteine 480. Residues asparagine 504 and asparagine 577 are each glycosylated (N-linked (GlcNAc...) asparagine). The Charge relay system role is filled by serine 638. A disulfide bond links cysteine 658 and cysteine 769. N-linked (GlcNAc...) asparagine glycosylation is present at asparagine 693. Active-site charge relay system residues include aspartate 717 and histidine 749.

Belongs to the peptidase S9B family. DPPIV subfamily. Expressed by the venom gland.

It is found in the secreted. The enzyme catalyses Release of an N-terminal dipeptide, Xaa-Yaa-|-Zaa-, from a polypeptide, preferentially when Yaa is Pro, provided Zaa is neither Pro nor hydroxyproline.. Its function is as follows. Venom dipeptidyl-peptidase which removes N-terminal dipeptides sequentially from polypeptides having unsubstituted N-termini provided that the penultimate residue is proline. May process venom proteins into their active forms and/or modulate the chemotactic activity of immune cells after the insect sting. This Vespa velutina (Asian yellow-legged hornet) protein is Venom dipeptidyl peptidase 4.